The primary structure comprises 303 residues: Phosphatidylglycerol--prolipoprotein diacylglyceryl transferase (303 aa).

3 helical membrane passes run 18-38, 58-78, and 107-127; these read VGFF…LIGL, LLPI…VIFE, and WQGG…ILIF. Arg154 is an a 1,2-diacyl-sn-glycero-3-phospho-(1'-sn-glycerol) binding site. 2 helical membrane-spanning segments follow: residues 193–213 and 266–286; these read PTFL…ISLI and IAQL…FWIY.

The protein belongs to the Lgt family.

It localises to the cell inner membrane. It catalyses the reaction L-cysteinyl-[prolipoprotein] + a 1,2-diacyl-sn-glycero-3-phospho-(1'-sn-glycerol) = an S-1,2-diacyl-sn-glyceryl-L-cysteinyl-[prolipoprotein] + sn-glycerol 1-phosphate + H(+). It participates in protein modification; lipoprotein biosynthesis (diacylglyceryl transfer). Catalyzes the transfer of the diacylglyceryl group from phosphatidylglycerol to the sulfhydryl group of the N-terminal cysteine of a prolipoprotein, the first step in the formation of mature lipoproteins. This chain is Phosphatidylglycerol--prolipoprotein diacylglyceryl transferase, found in Prochlorococcus marinus (strain MIT 9211).